The sequence spans 432 residues: MAGTGHTPEEALALLKRGAEEIVPEEELLAKLKEGRPLTVKLGADPTRPDLHLGHAVVLRKMRQFQELGHKVVLIIGDFTGMIGDPSGRSKTRPPLTLEETRENAKTYVAQAGKILRQEPHLFELRYNSEWLEGLTFKEVVRLTSLMTVAQMLEREDFKKRYEAGIPISLHELLYPFAQAYDSVAIRADVEMGGTDQRFNLLVGREVQRAYGQSPQVCFLMPLLVGLDGREKMSKSLDNYIGLTEPPEAMFKKLMRVPDPLLPSYFRLLTDLEEEEIEALLKAGPVPAHRVLARLLTAAYALPQIPPRIDRAFYESLGYAWEAFGRDKEAGPEEVRRAEARYDEVAKGGIPEEIPEVTIPASELKEGRIWVARLFTLAGLTPSNAEARRLIQNRGLRLDGEVLTDPMLQVDLSRPRILQRGKDRFVRVRLSD.

The 'HIGH' region signature appears at 46–55 (PTRPDLHLGH). The short motif at 232–236 (KMSKS) is the 'KMSKS' region element. Residue K235 coordinates ATP. The 62-residue stretch at 369 to 430 (IWVARLFTLA…GKDRFVRVRL (62 aa)) folds into the S4 RNA-binding domain.

It belongs to the class-I aminoacyl-tRNA synthetase family. TyrS type 2 subfamily. In terms of assembly, homodimer.

Its subcellular location is the cytoplasm. The catalysed reaction is tRNA(Tyr) + L-tyrosine + ATP = L-tyrosyl-tRNA(Tyr) + AMP + diphosphate + H(+). Catalyzes the attachment of tyrosine to tRNA(Tyr) in a two-step reaction: tyrosine is first activated by ATP to form Tyr-AMP and then transferred to the acceptor end of tRNA(Tyr). The protein is Tyrosine--tRNA ligase of Thermus thermophilus (strain ATCC BAA-163 / DSM 7039 / HB27).